The chain runs to 570 residues: E3 ubiquitin-protein ligase ZFP91 (570 aa).

The span at 1–12 (MPGETEEPRPPE) shows a compositional bias: basic and acidic residues. The tract at residues 1-306 (MPGETEEPRP…PRLPKRRKKP (306 aa)) is disordered. Composition is skewed to low complexity over residues 31 to 43 (QRPP…APAG) and 59 to 68 (AAAAAAAAAV). Residues 69-82 (SRRRKAEYPRRRRS) are compositionally biased toward basic residues. Residues S83 and S103 each carry the phosphoserine modification. The segment covering 94 to 104 (QQPQAAKSPSP) has biased composition (polar residues). Residues 119–128 (VTTDKDPKEE) are compositionally biased toward basic and acidic residues. Over residues 207-223 (SEEEEEEEEEMLISEEE) the composition is skewed to acidic residues. Basic and acidic residues-rich tracts occupy residues 224 to 245 (IPFK…ETPK) and 252 to 269 (KVKE…VEVE). Positions 270–282 (VKEEENEIREDEE) are enriched in acidic residues. C2H2-type zinc fingers lie at residues 311–336 (VRCE…KYQH), 342–366 (YVCP…AKHH), 372–394 (YICE…RMIH), 400–422 (LQCE…MKKH), and 430–453 (FSCN…AKSH). The interval 338–368 (LKKKYVCPHPSCGRLFRLQKQLLRHAKHHTD) is interaction with MAP3K14/NIK.

Belongs to the krueppel C2H2-type zinc-finger protein family. In terms of assembly, interacts with MAP3K14/NIK. Expressed ubiquitously, particularly at high level in testis. Isoform 2 is testis specific.

The protein resides in the nucleus. The catalysed reaction is S-ubiquitinyl-[E2 ubiquitin-conjugating enzyme]-L-cysteine + [acceptor protein]-L-lysine = [E2 ubiquitin-conjugating enzyme]-L-cysteine + N(6)-ubiquitinyl-[acceptor protein]-L-lysine.. It functions in the pathway protein modification; protein ubiquitination. Functionally, atypical E3 ubiquitin-protein ligase that mediates 'Lys-63'-linked ubiquitination of MAP3K14/NIK, leading to stabilize and activate MAP3K14/NIK. It thereby acts as an activator of the non-canonical NF-kappa-B2/NFKB2 pathway. May also play an important role in cell proliferation and/or anti-apoptosis. This Homo sapiens (Human) protein is E3 ubiquitin-protein ligase ZFP91 (ZFP91).